The sequence spans 477 residues: Probable F-box protein At5g25300 (477 aa).

Positions 346–377 (VDMNKEDSQIEINEKETKINQEHDQSDETQAK) form a coiled coil. The F-box domain maps to 412–458 (SPPWSELPGDILRSVFERLSFVDFQRAKQTCPIKRSKSNCLRLWLIT).

The chain is Probable F-box protein At5g25300 from Arabidopsis thaliana (Mouse-ear cress).